Consider the following 177-residue polypeptide: Translation initiation factor IF-3 (177 aa).

It belongs to the IF-3 family. In terms of assembly, monomer.

The protein localises to the cytoplasm. Functionally, IF-3 binds to the 30S ribosomal subunit and shifts the equilibrium between 70S ribosomes and their 50S and 30S subunits in favor of the free subunits, thus enhancing the availability of 30S subunits on which protein synthesis initiation begins. This is Translation initiation factor IF-3 from Nostoc sp. (strain PCC 7120 / SAG 25.82 / UTEX 2576).